The sequence spans 436 residues: 3-phosphoshikimate 1-carboxyvinyltransferase (436 aa).

Residues Lys-22, Ser-23, and Arg-27 each coordinate 3-phosphoshikimate. Lys-22 is a phosphoenolpyruvate binding site. Residues Gly-95 and Arg-123 each contribute to the phosphoenolpyruvate site. The 3-phosphoshikimate site is built by Ser-170, Ser-171, Gln-172, Ser-201, Asp-322, and Lys-349. Phosphoenolpyruvate is bound at residue Gln-172. Residue Asp-322 is the Proton acceptor of the active site. Residues Arg-353, Arg-397, and Lys-422 each coordinate phosphoenolpyruvate.

The protein belongs to the EPSP synthase family. As to quaternary structure, monomer.

Its subcellular location is the cytoplasm. The catalysed reaction is 3-phosphoshikimate + phosphoenolpyruvate = 5-O-(1-carboxyvinyl)-3-phosphoshikimate + phosphate. The protein operates within metabolic intermediate biosynthesis; chorismate biosynthesis; chorismate from D-erythrose 4-phosphate and phosphoenolpyruvate: step 6/7. Functionally, catalyzes the transfer of the enolpyruvyl moiety of phosphoenolpyruvate (PEP) to the 5-hydroxyl of shikimate-3-phosphate (S3P) to produce enolpyruvyl shikimate-3-phosphate and inorganic phosphate. The chain is 3-phosphoshikimate 1-carboxyvinyltransferase from Ralstonia nicotianae (strain ATCC BAA-1114 / GMI1000) (Ralstonia solanacearum).